The primary structure comprises 349 residues: 3-isopropylmalate dehydrogenase (349 aa).

Substrate is bound by residues Arg-91, Arg-101, Arg-129, and Asp-219. The Mg(2+) site is built by Asp-219, Asp-243, and Asp-247. Position 277 to 289 (277 to 289 (GSAPDIAGLGKAN)) interacts with NAD(+).

It belongs to the isocitrate and isopropylmalate dehydrogenases family. LeuB type 1 subfamily. As to quaternary structure, homodimer. The cofactor is Mg(2+). It depends on Mn(2+) as a cofactor.

Its subcellular location is the cytoplasm. It catalyses the reaction (2R,3S)-3-isopropylmalate + NAD(+) = 4-methyl-2-oxopentanoate + CO2 + NADH. It participates in amino-acid biosynthesis; L-leucine biosynthesis; L-leucine from 3-methyl-2-oxobutanoate: step 3/4. Its function is as follows. Catalyzes the oxidation of 3-carboxy-2-hydroxy-4-methylpentanoate (3-isopropylmalate) to 3-carboxy-4-methyl-2-oxopentanoate. The product decarboxylates to 4-methyl-2 oxopentanoate. In Zymomonas mobilis subsp. mobilis (strain ATCC 31821 / ZM4 / CP4), this protein is 3-isopropylmalate dehydrogenase.